A 377-amino-acid polypeptide reads, in one-letter code: Glutamate 5-kinase (377 aa).

K20 contributes to the ATP binding site. The substrate site is built by S59, D146, and N158. ATP contacts are provided by residues 178–179 (SD) and 220–226 (TGGMSTK). One can recognise a PUA domain in the interval 285-363 (RGTLTVDAGA…ADIEAVLGYR (79 aa)).

It belongs to the glutamate 5-kinase family.

It is found in the cytoplasm. It catalyses the reaction L-glutamate + ATP = L-glutamyl 5-phosphate + ADP. The protein operates within amino-acid biosynthesis; L-proline biosynthesis; L-glutamate 5-semialdehyde from L-glutamate: step 1/2. Catalyzes the transfer of a phosphate group to glutamate to form L-glutamate 5-phosphate. In Myxococcus xanthus (strain DK1622), this protein is Glutamate 5-kinase.